The primary structure comprises 316 residues: UDP-N-acetylenolpyruvoylglucosamine reductase (316 aa).

One can recognise an FAD-binding PCMH-type domain in the interval 27–225 (VGGKAERFYR…KTAINALLKK (199 aa)). R190 is a catalytic residue. S239 acts as the Proton donor in catalysis. E309 is an active-site residue.

This sequence belongs to the MurB family. FAD serves as cofactor.

The protein resides in the cytoplasm. The catalysed reaction is UDP-N-acetyl-alpha-D-muramate + NADP(+) = UDP-N-acetyl-3-O-(1-carboxyvinyl)-alpha-D-glucosamine + NADPH + H(+). It functions in the pathway cell wall biogenesis; peptidoglycan biosynthesis. Cell wall formation. The sequence is that of UDP-N-acetylenolpyruvoylglucosamine reductase from Coxiella burnetii (strain Dugway 5J108-111).